A 146-amino-acid polypeptide reads, in one-letter code: Meiotically up-regulated gene 96 protein (146 aa).

A helical membrane pass occupies residues 85–104 (LIRYSLILTCLVAILLSVLW).

It localises to the cytoplasm. Its subcellular location is the membrane. Functionally, has a role in meiosis. In Schizosaccharomyces pombe (strain 972 / ATCC 24843) (Fission yeast), this protein is Meiotically up-regulated gene 96 protein (mug96).